Consider the following 334-residue polypeptide: Glycerol-1-phosphate dehydrogenase [NAD(P)+] (334 aa).

NAD(+) contacts are provided by residues 77–81 (GRPID) and 99–102 (TTAS). Residue aspartate 104 participates in substrate binding. Residue serine 108 participates in NAD(+) binding. Residue aspartate 147 participates in substrate binding. 2 residues coordinate Zn(2+): aspartate 147 and histidine 225. Histidine 229 serves as a coordination point for substrate. Histidine 246 contributes to the Zn(2+) binding site.

The protein belongs to the glycerol-1-phosphate dehydrogenase family. Zn(2+) is required as a cofactor.

It localises to the cytoplasm. It catalyses the reaction sn-glycerol 1-phosphate + NAD(+) = dihydroxyacetone phosphate + NADH + H(+). It carries out the reaction sn-glycerol 1-phosphate + NADP(+) = dihydroxyacetone phosphate + NADPH + H(+). It functions in the pathway membrane lipid metabolism; glycerophospholipid metabolism. In terms of biological role, catalyzes the NAD(P)H-dependent reduction of dihydroxyacetonephosphate (DHAP or glycerone phosphate) to glycerol 1-phosphate (G1P). The G1P thus generated is used as the glycerophosphate backbone of phospholipids in the cellular membranes of Archaea. The chain is Glycerol-1-phosphate dehydrogenase [NAD(P)+] from Methanococcus maripaludis (strain C5 / ATCC BAA-1333).